Consider the following 271-residue polypeptide: Phosphatidylinositol transfer protein beta isoform (271 aa).

N6-acetyllysine is present on K215. S262 is modified (phosphoserine).

The protein belongs to the PtdIns transfer protein family. PI transfer class I subfamily. In terms of processing, constitutive phosphorylation of Ser-262 has no effect on phospholipid transfer activity but is required for Golgi targeting. As to expression, expressed abundantly in brain, kidney, liver, and lung, but in a lesser amount in testis.

The protein resides in the golgi apparatus. The protein localises to the golgi apparatus membrane. It is found in the endoplasmic reticulum membrane. It carries out the reaction a 1,2-diacyl-sn-glycero-3-phosphocholine(in) = a 1,2-diacyl-sn-glycero-3-phosphocholine(out). The enzyme catalyses a 1,2-diacyl-sn-glycero-3-phospho-(1D-myo-inositol)(in) = a 1,2-diacyl-sn-glycero-3-phospho-(1D-myo-inositol)(out). It catalyses the reaction an N-(acyl)-sphingosylphosphocholine(in) = an N-(acyl)-sphingosylphosphocholine(out). With respect to regulation, phosphatidylinositol transfer activity is inhibited by N-ethylmaleimide. Functionally, catalyzes the transfer of phosphatidylinositol between membranes. Also catalyzes the transfer of phosphatidylcholine and sphingomyelin between membranes. Required for COPI-mediated retrograde transport from the Golgi to the endoplasmic reticulum; phosphatidylinositol and phosphatidylcholine transfer activity is essential for this function. This is Phosphatidylinositol transfer protein beta isoform (Pitpnb) from Rattus norvegicus (Rat).